We begin with the raw amino-acid sequence, 65 residues long: 7 kDa A-type inclusion protein (65 aa).

A compositionally biased stretch (polar residues) spans 1–20 (MSNQNIPQLSEYQTSVSQVA). Residues 1 to 31 (MSNQNIPQLSEYQTSVSQVAVTPPPKPETPQ) are disordered.

The chain is 7 kDa A-type inclusion protein from Vaccinia virus (strain Copenhagen) (VACV).